Consider the following 209-residue polypeptide: tRNA (guanine-N(7)-)-methyltransferase (209 aa).

S-adenosyl-L-methionine is bound by residues aspartate 35, glutamate 60, asparagine 87, and aspartate 113. Aspartate 113 is a catalytic residue. Positions 117 and 149 each coordinate substrate.

The protein belongs to the class I-like SAM-binding methyltransferase superfamily. TrmB family.

The enzyme catalyses guanosine(46) in tRNA + S-adenosyl-L-methionine = N(7)-methylguanosine(46) in tRNA + S-adenosyl-L-homocysteine. It participates in tRNA modification; N(7)-methylguanine-tRNA biosynthesis. In terms of biological role, catalyzes the formation of N(7)-methylguanine at position 46 (m7G46) in tRNA. In Prochlorococcus marinus (strain MIT 9215), this protein is tRNA (guanine-N(7)-)-methyltransferase.